The following is a 67-amino-acid chain: Alpha-toxin Bu1 (67 aa).

Residues 3–65 enclose the LCN-type CS-alpha/beta domain; the sequence is RDAYIADDKN…VPIRIPGRCR (63 aa). 4 disulfides stabilise this stretch: cysteine 13-cysteine 64, cysteine 17-cysteine 37, cysteine 23-cysteine 47, and cysteine 27-cysteine 49. Residue arginine 65 is modified to Arginine amide.

It belongs to the long (4 C-C) scorpion toxin superfamily. Sodium channel inhibitor family. Alpha subfamily. As to expression, expressed by the venom gland.

The protein resides in the secreted. Its function is as follows. Alpha toxins bind voltage-independently at site-3 of sodium channels (Nav) and inhibit the inactivation of the activated channels, thereby blocking neuronal transmission. Since the experiments have been done on F11 cells (immortalized cell line derived from rat DRG neurons mainly expressing Nav1.3/SCN3A, but also Nav1.7/SCN9A and Nav1.2/SCN2A), it is supposed to act on these channels. The slow of inactivation process is partially reversible. Is lethal to mice. The polypeptide is Alpha-toxin Bu1 (Buthacus macrocentrus (Turkish scorpion)).